An 875-amino-acid chain; its full sequence is SPbeta prophage-derived uncharacterized protein YomG (875 aa).

Residues 351–381 (AKKAEISRINSQITNISQEIEKLKDRLSMDK) adopt a coiled-coil conformation. Residues 537–648 (PVANPTILNN…SIDSSGRILS (112 aa)) enclose the Fibronectin type-III domain.

In Bacillus subtilis (strain 168), this protein is SPbeta prophage-derived uncharacterized protein YomG (yomG).